We begin with the raw amino-acid sequence, 206 residues long: Small ribosomal subunit protein uS4 (206 aa).

Residues 98–163 form the S4 RNA-binding domain; sequence MRLDNVVYRL…SEKFKTFVEN (66 aa).

It belongs to the universal ribosomal protein uS4 family. In terms of assembly, part of the 30S ribosomal subunit. Contacts protein S5. The interaction surface between S4 and S5 is involved in control of translational fidelity.

Its function is as follows. One of the primary rRNA binding proteins, it binds directly to 16S rRNA where it nucleates assembly of the body of the 30S subunit. In terms of biological role, with S5 and S12 plays an important role in translational accuracy. The sequence is that of Small ribosomal subunit protein uS4 from Clostridium botulinum (strain Alaska E43 / Type E3).